Consider the following 379-residue polypeptide: Chaperone protein DnaJ (379 aa).

Residues 5 to 70 (DYYEVLGVEK…QKRAAYDQYG (66 aa)) enclose the J domain. A CR-type zinc finger spans residues 133–211 (GKSVEIRVPT…CHGQGRVEKT (79 aa)). Residues Cys146, Cys149, Cys163, Cys166, Cys185, Cys188, Cys199, and Cys202 each coordinate Zn(2+). CXXCXGXG motif repeat units lie at residues 146 to 153 (CDTCDGSG), 163 to 170 (CTTCHGQG), 185 to 192 (CPTCGGKG), and 199 to 206 (CDVCHGQG).

Belongs to the DnaJ family. In terms of assembly, homodimer. It depends on Zn(2+) as a cofactor.

It is found in the cytoplasm. In terms of biological role, participates actively in the response to hyperosmotic and heat shock by preventing the aggregation of stress-denatured proteins and by disaggregating proteins, also in an autonomous, DnaK-independent fashion. Unfolded proteins bind initially to DnaJ; upon interaction with the DnaJ-bound protein, DnaK hydrolyzes its bound ATP, resulting in the formation of a stable complex. GrpE releases ADP from DnaK; ATP binding to DnaK triggers the release of the substrate protein, thus completing the reaction cycle. Several rounds of ATP-dependent interactions between DnaJ, DnaK and GrpE are required for fully efficient folding. Also involved, together with DnaK and GrpE, in the DNA replication of plasmids through activation of initiation proteins. This chain is Chaperone protein DnaJ, found in Pseudoalteromonas atlantica (strain T6c / ATCC BAA-1087).